A 452-amino-acid polypeptide reads, in one-letter code: cAMP/cGMP-dependent 3',5'-cAMP/cGMP phosphodiesterase A (452 aa).

Residues 1–23 (MALNKKLISLLLLIFIILNIVNS) form the signal peptide. A propeptide spanning residues 24 to 49 (HQQEDCDDDDEDIGISAERSERRSVK) is cleaved from the precursor. N-linked (GlcNAc...) asparagine glycosylation is found at N101, N141, and N277.

It belongs to the cyclic nucleotide phosphodiesterase class-II family.

It localises to the secreted. The protein resides in the extracellular space. Its subcellular location is the cell surface. It carries out the reaction 3',5'-cyclic AMP + H2O = AMP + H(+). It catalyses the reaction 3',5'-cyclic GMP + H2O = GMP + H(+). Inhibited by dithiotreitol (DTT). In terms of biological role, phosphodiesterase which displays a preference for cAMP over cGMP. Involved in the degradation of extracellular cAMP. Maintains the responsiveness of cells to the chemoattractant cAMP during the aggregation phase of development. This Dictyostelium discoideum (Social amoeba) protein is cAMP/cGMP-dependent 3',5'-cAMP/cGMP phosphodiesterase A (pdsA).